A 259-amino-acid chain; its full sequence is Flagellar brake protein YcgR (259 aa).

Residues 129–246 (QRREFYRLQT…DNAIQRYIFK (118 aa)) enclose the PilZ domain.

Belongs to the YcgR family. As to quaternary structure, monomer. Interacts with the flagellar basal bodies.

Its subcellular location is the bacterial flagellum basal body. In terms of biological role, acts as a flagellar brake, regulating swimming and swarming in a bis-(3'-5') cyclic diguanylic acid (c-di-GMP)-dependent manner. Binds 1 c-di-GMP dimer per subunit. Increasing levels of c-di-GMP lead to decreased motility. In Azoarcus sp. (strain BH72), this protein is Flagellar brake protein YcgR.